A 477-amino-acid chain; its full sequence is Tripartite motif-containing protein 72 (477 aa).

16 residues coordinate Zn(2+): C14, C17, C29, H31, C34, C37, C53, C56, C86, H89, C97, D100, C105, C108, H114, and H117. Residues 14–57 (CPLCLQLFDAPVTAECGHSFCRACLGRVAGEPAADGTVLCPCCQ) form an RING-type zinc finger. A B box-type zinc finger spans residues 81 to 122 (VPQGHCEEHLDPLSIYCEQDRALVCGVCASLGSHRGHRLLPA). Positions 135–232 (QQKLQLQEAC…EKVLEEVADK (98 aa)) form a coiled coil. The residue at position 144 (C144) is an S-nitrosocysteine. Position 255 is a phosphoserine (S255). The region spanning 271-475 (DFKFQVWRKM…PLLLVGPEGA (205 aa)) is the B30.2/SPRY domain.

This sequence belongs to the TRIM/RBCC family. As to quaternary structure, homodimer. Homooligomer; disulfide-linked. Oligomerizes on the phospholipid membrane. Interacts with DYSF and CAV3. Disulfide bond formation at Cys-242 occurs in case of membrane damage that cause the entry of the oxidized milieu of the extracellular space, resulting in homooligomerization. In terms of processing, S-nitrosylation at Cys-144 stabilizes TRIM72 and protects against oxidation-induced protein degradation and cell death.

The protein localises to the cell membrane. Its subcellular location is the sarcolemma. The protein resides in the cytoplasmic vesicle membrane. It catalyses the reaction S-ubiquitinyl-[E2 ubiquitin-conjugating enzyme]-L-cysteine + [acceptor protein]-L-lysine = [E2 ubiquitin-conjugating enzyme]-L-cysteine + N(6)-ubiquitinyl-[acceptor protein]-L-lysine.. It functions in the pathway protein modification; protein ubiquitination. Specifically binds phosphatidylserine. The binding to phospholipids enhances ubiquitination activity. Muscle-specific E3 ubiquitin-protein ligase that plays a central role in cell membrane repair by nucleating the assembly of the repair machinery at injury sites. Its ubiquitination activity is mediated by E2 ubiquitin-conjugating enzymes UBE2D1, UBE2D2 and UBE2D3. Acts as a sensor of oxidation: upon membrane damage, entry of extracellular oxidative environment results in disulfide bond formation and homooligomerization at the injury site. This oligomerization acts as a nucleation site for recruitment of TRIM72-containing vesicles to the injury site, leading to membrane patch formation. Probably acts upstream of the Ca(2+)-dependent membrane resealing process. Required for transport of DYSF to sites of cell injury during repair patch formation. Regulates membrane budding and exocytosis. May be involved in the regulation of the mobility of KCNB1-containing endocytic vesicles. The protein is Tripartite motif-containing protein 72 of Homo sapiens (Human).